The chain runs to 286 residues: Nucleotide-binding protein PLES_48441 (286 aa).

8–15 (GRSGSGKS) is an ATP binding site. 60–63 (DARN) lines the GTP pocket.

The protein belongs to the RapZ-like family.

Displays ATPase and GTPase activities. The polypeptide is Nucleotide-binding protein PLES_48441 (Pseudomonas aeruginosa (strain LESB58)).